The following is a 252-amino-acid chain: Large ribosomal subunit protein uL3 (252 aa).

At Q169 the chain carries N5-methylglutamine.

Belongs to the universal ribosomal protein uL3 family. Part of the 50S ribosomal subunit. Forms a cluster with proteins L14 and L19. In terms of processing, methylated by PrmB.

One of the primary rRNA binding proteins, it binds directly near the 3'-end of the 23S rRNA, where it nucleates assembly of the 50S subunit. In Hyphomonas neptunium (strain ATCC 15444), this protein is Large ribosomal subunit protein uL3.